The sequence spans 723 residues: BTB/POZ domain-containing protein 18 (723 aa).

Residues 34-102 form the BTB domain; it reads CDALLQAEGE…LYTSEMEVSQ (69 aa). 3 disordered regions span residues 150–176, 188–350, and 370–394; these read APIS…PSPL, EGAH…EEGQ, and EPPL…PSGT. Polar residues-rich tracts occupy residues 162-174 and 195-205; these read RPQT…QTPS and NLPNADSLSDT. Composition is skewed to low complexity over residues 217–227 and 271–286; these read QESRSSPSSQR and TSTP…SMPT. Composition is skewed to basic and acidic residues over residues 303–312 and 327–336; these read QGVDKQKPGE and KPAENKKQSP. Residue Ser-414 is modified to Phosphoserine. Residues 603–637 form a disordered region; the sequence is TPDLEITSSQPLDGQGEKLLHFDSSDPSQRSYNHL. Basic and acidic residues predominate over residues 617 to 626; it reads QGEKLLHFDS. Positions 627 to 636 are enriched in polar residues; sequence SDPSQRSYNH. Residues Ser-682 and Ser-683 each carry the phosphoserine modification. Residues 699–723 form a disordered region; sequence LGPTSVPSVWPDPSSESETEVDILT. The span at 713–723 shows a compositional bias: acidic residues; sequence SESETEVDILT.

In terms of tissue distribution, expressed in testis.

It localises to the nucleus. In terms of biological role, specifically required during spermatogenesis to promote expression of piRNA precursors. The piRNA metabolic process mediates the repression of transposable elements during meiosis by forming complexes composed of piRNAs and Piwi proteins and governs the methylation and subsequent repression of transposons, which is essential for the germline integrity. Acts by facilitating transcription elongation at piRNA loci during pachytene. This Mus musculus (Mouse) protein is BTB/POZ domain-containing protein 18.